A 165-amino-acid chain; its full sequence is Probable calcium-binding protein CML18 (165 aa).

4 consecutive EF-hand domains span residues 16–51, 52–87, 90–125, and 126–161; these read EQLA…LGLK, PSQD…DLVK, YTDD…LGHA, and LTAE…AAFD. Ca(2+) is bound by residues D29, N31, D33, S35, E40, D65, N67, N69, E76, D103, D105, N107, Y109, E114, D139, D141, D143, C145, and E150.

Calcium and pH-dependent interaction with NHX1 (increases when pH decreases, better at pH 5.5 than at pH 7.5). Also interacts with the CPB protein At2g18750.

It localises to the vacuole. In terms of biological role, potential calcium sensor that modulates ion selectivity of NHX1. The polypeptide is Probable calcium-binding protein CML18 (CML18) (Arabidopsis thaliana (Mouse-ear cress)).